A 404-amino-acid chain; its full sequence is Formate-dependent phosphoribosylglycinamide formyltransferase (404 aa).

N(1)-(5-phospho-beta-D-ribosyl)glycinamide is bound by residues 25–26 and glutamate 85; that span reads EL. Residues arginine 118, lysine 159, 164–169, 199–202, and glutamate 207 each bind ATP; these read SSGKGQ and EGFI. An ATP-grasp domain is found at 123–318; the sequence is RLAAEELGLA…EFELHARAIL (196 aa). The Mg(2+) site is built by glutamate 277 and glutamate 289. N(1)-(5-phospho-beta-D-ribosyl)glycinamide contacts are provided by residues aspartate 296, lysine 365, and 372–373; that span reads RR.

It belongs to the PurK/PurT family. Homodimer.

The catalysed reaction is N(1)-(5-phospho-beta-D-ribosyl)glycinamide + formate + ATP = N(2)-formyl-N(1)-(5-phospho-beta-D-ribosyl)glycinamide + ADP + phosphate + H(+). The protein operates within purine metabolism; IMP biosynthesis via de novo pathway; N(2)-formyl-N(1)-(5-phospho-D-ribosyl)glycinamide from N(1)-(5-phospho-D-ribosyl)glycinamide (formate route): step 1/1. In terms of biological role, involved in the de novo purine biosynthesis. Catalyzes the transfer of formate to 5-phospho-ribosyl-glycinamide (GAR), producing 5-phospho-ribosyl-N-formylglycinamide (FGAR). Formate is provided by PurU via hydrolysis of 10-formyl-tetrahydrofolate. The polypeptide is Formate-dependent phosphoribosylglycinamide formyltransferase (Burkholderia vietnamiensis (strain G4 / LMG 22486) (Burkholderia cepacia (strain R1808))).